A 406-amino-acid chain; its full sequence is Multifunctional CCA protein (406 aa).

Residues G8 and R11 each contribute to the ATP site. CTP contacts are provided by G8 and R11. Mg(2+)-binding residues include D21 and D23. 3 residues coordinate ATP: R91, R138, and R141. CTP-binding residues include R91, R138, and R141. One can recognise an HD domain in the interval 229–331 (TGIHQEMVSD…LELLGRCDAL (103 aa)).

It belongs to the tRNA nucleotidyltransferase/poly(A) polymerase family. Bacterial CCA-adding enzyme type 1 subfamily. In terms of assembly, monomer. Can also form homodimers and oligomers. Mg(2+) serves as cofactor. Ni(2+) is required as a cofactor.

The catalysed reaction is a tRNA precursor + 2 CTP + ATP = a tRNA with a 3' CCA end + 3 diphosphate. The enzyme catalyses a tRNA with a 3' CCA end + 2 CTP + ATP = a tRNA with a 3' CCACCA end + 3 diphosphate. Its function is as follows. Catalyzes the addition and repair of the essential 3'-terminal CCA sequence in tRNAs without using a nucleic acid template. Adds these three nucleotides in the order of C, C, and A to the tRNA nucleotide-73, using CTP and ATP as substrates and producing inorganic pyrophosphate. tRNA 3'-terminal CCA addition is required both for tRNA processing and repair. Also involved in tRNA surveillance by mediating tandem CCA addition to generate a CCACCA at the 3' terminus of unstable tRNAs. While stable tRNAs receive only 3'-terminal CCA, unstable tRNAs are marked with CCACCA and rapidly degraded. This Stenotrophomonas maltophilia (strain K279a) protein is Multifunctional CCA protein.